Consider the following 344-residue polypeptide: Fe-S cluster assembly protein DRE2 (344 aa).

The N-terminal SAM-like domain stretch occupies residues 1–160 (MTSNILLLLH…KKLNNDNAST (160 aa)). A disordered region spans residues 154 to 179 (NNDNASTPGLTDSSAGTSEDETATVS). Polar residues predominate over residues 155 to 170 (NDNASTPGLTDSSAGT). Positions 161–223 (PGLTDSSAGT…NDLIAESNKY (63 aa)) are linker. Residues cysteine 231, cysteine 243, cysteine 246, and cysteine 248 each contribute to the [2Fe-2S] cluster site. The segment at 231 to 248 (CELPNGKKRKKACKDCTC) is fe-S binding site A. [4Fe-4S] cluster contacts are provided by cysteine 313, cysteine 316, cysteine 324, and cysteine 327. 2 consecutive short sequence motifs (cx2C motif) follow at residues 313-316 (CGSC) and 324-327 (CDGC). A fe-S binding site B region spans residues 313-327 (CGSCSLGDAFRCDGC).

Belongs to the anamorsin family. Monomer. Interacts with TAH18. Interacts with MIA40. [2Fe-2S] cluster is required as a cofactor. The cofactor is [4Fe-4S] cluster.

The protein resides in the cytoplasm. It localises to the mitochondrion intermembrane space. Component of the cytosolic iron-sulfur (Fe-S) protein assembly (CIA) machinery required for the maturation of extramitochondrial Fe-S proteins. Part of an electron transfer chain functioning in an early step of cytosolic Fe-S biogenesis, facilitating the de novo assembly of a [4Fe-4S] cluster on the scaffold complex CFD1-NBP35. Electrons are transferred to DRE2 from NADPH via the FAD- and FMN-containing protein TAH18. TAH18-DRE2 are also required for the assembly of the diferric tyrosyl radical cofactor of ribonucleotide reductase (RNR), probably by providing electrons for reduction during radical cofactor maturation in the catalytic small subunit RNR2. The sequence is that of Fe-S cluster assembly protein DRE2 from Candida tropicalis (strain ATCC MYA-3404 / T1) (Yeast).